Consider the following 314-residue polypeptide: Adenosine receptor A3 (314 aa).

At 1-14 (MAVNGTALLLANVT) the chain is on the extracellular side. N-linked (GlcNAc...) asparagine glycosylation is found at Asn4 and Asn12. Residues 15 to 37 (YITVEILIGLCAIVGNVLVIWVV) form a helical membrane-spanning segment. At 38 to 48 (KLNPSLQTTTF) the chain is on the cytoplasmic side. Residues 49–72 (YFIVSLALADIAVGVLVMPLAIVI) traverse the membrane as a helical segment. Residues 73 to 84 (SLGITIQFYNCL) are Extracellular-facing. Cys83 and Cys166 are joined by a disulfide. A helical membrane pass occupies residues 85–106 (FMTCLLLIFTHASIMSLLAIAV). The Cytoplasmic segment spans residues 107 to 126 (DRYLRVKLTVRYRRVTTQRR). A helical membrane pass occupies residues 127-148 (IWLALGLCWLVSFLVGLTPMFG). At 149–177 (WNMKLTSEHQRNVTFLSCQFSSVMRMDYM) the chain is on the extracellular side. The N-linked (GlcNAc...) asparagine glycan is linked to Asn160. The helical transmembrane segment at 178–198 (VYFSFFTWILIPLVVMCAIYL) threads the bilayer. Residues 199–231 (DIFYVIRNKLNQNFSSSKETGAFYGREFKTAKS) are Cytoplasmic-facing. The chain crosses the membrane as a helical span at residues 232 to 255 (LFLVLFLFAFSWLPLSIINCITYF). The Extracellular portion of the chain corresponds to 256-261 (HGEVPQ). The helical transmembrane segment at 262–284 (IILYLGILLSHANSMMNPIVYAY) threads the bilayer. The Cytoplasmic segment spans residues 285 to 314 (KIKKFKETYLLIFKTYMICQSSDSLDSSTE). Cys303 carries the S-palmitoyl cysteine lipid modification.

It belongs to the G-protein coupled receptor 1 family.

It localises to the cell membrane. Its function is as follows. Receptor for adenosine. The activity of this receptor is mediated by G proteins which inhibits adenylyl cyclase. This Canis lupus familiaris (Dog) protein is Adenosine receptor A3 (ADORA3).